The following is a 764-amino-acid chain: 5-methyltetrahydropteroyltriglutamate--homocysteine methyltransferase (764 aa).

5-methyltetrahydropteroyltri-L-glutamate is bound by residues 16-19 and Lys-115; that span reads RELK. L-homocysteine-binding positions include 435–437 and Glu-488; that span reads IGS. L-methionine-binding positions include 435 to 437 and Glu-488; that span reads IGS. Residues 519–520 and Trp-565 each bind 5-methyltetrahydropteroyltri-L-glutamate; that span reads RC. Asp-603 is an L-homocysteine binding site. Asp-603 provides a ligand contact to L-methionine. A 5-methyltetrahydropteroyltri-L-glutamate-binding site is contributed by Glu-609. Zn(2+)-binding residues include His-645, Cys-647, and Glu-669. His-698 acts as the Proton donor in catalysis. Cys-730 lines the Zn(2+) pocket.

This sequence belongs to the vitamin-B12 independent methionine synthase family. Zn(2+) serves as cofactor.

It catalyses the reaction 5-methyltetrahydropteroyltri-L-glutamate + L-homocysteine = tetrahydropteroyltri-L-glutamate + L-methionine. The protein operates within amino-acid biosynthesis; L-methionine biosynthesis via de novo pathway; L-methionine from L-homocysteine (MetE route): step 1/1. Catalyzes the transfer of a methyl group from 5-methyltetrahydrofolate to homocysteine resulting in methionine formation. This chain is 5-methyltetrahydropteroyltriglutamate--homocysteine methyltransferase, found in Burkholderia thailandensis (strain ATCC 700388 / DSM 13276 / CCUG 48851 / CIP 106301 / E264).